We begin with the raw amino-acid sequence, 238 residues long: Small ribosomal subunit protein uS2 (238 aa).

The protein belongs to the universal ribosomal protein uS2 family.

This is Small ribosomal subunit protein uS2 from Synechococcus sp. (strain CC9605).